The sequence spans 1413 residues: GTPase-activating protein and VPS9 domain-containing protein 1 (1413 aa).

In terms of domain architecture, Ras-GAP spans 147–385; that stretch reads SYLLQVLRYL…AAFLDVVIGG (239 aa). Phosphoserine is present on Ser-227. 2 positions are modified to phosphothreonine: Thr-390 and Thr-458. Disordered regions lie at residues 448–474, 540–587, 718–799, and 826–852; these read KPGKSSSLEMTPYSTPQLSPAATPANK, LSDG…GSNG, ESCS…PPSQ, and HYARPSHPPPDPPILEGAVGGNEARLP. Over residues 451–467 the composition is skewed to polar residues; it reads KSSSLEMTPYSTPQLSP. Tyr-460 is subject to Phosphotyrosine. Position 466 is a phosphoserine (Ser-466). Position 470 is a phosphothreonine (Thr-470). Residues Ser-721, Ser-725, and Ser-736 each carry the phosphoserine modification. Residues 737 to 756 show a composition bias toward polar residues; sequence SRPSTPGLSVVSGISATSED. Thr-741 bears the Phosphothreonine mark. A Phosphoserine modification is found at Ser-745. Residues 757-768 show a composition bias toward basic and acidic residues; that stretch reads IPNKIEDLRSEC. Ser-856, Ser-882, Ser-883, Ser-888, Ser-894, Ser-946, Ser-972, and Ser-999 each carry phosphoserine. The segment covering 871 to 882 has biased composition (basic and acidic residues); it reads HSYPERLVRSRS. Positions 871 to 957 are disordered; the sequence is HSYPERLVRS…DEKSDRNRPW (87 aa). A compositionally biased stretch (low complexity) spans 883-897; the sequence is SDVVSSVRRPMSDPS. The span at 934-955 shows a compositional bias: basic and acidic residues; it reads DSSRGETEERKDSDDEKSDRNR. The disordered stretch occupies residues 1011–1049; it reads VMGDGESAHDSPRDETLQNISADDLPDSASQAAHPQDSA. Over residues 1016-1026 the composition is skewed to basic and acidic residues; it reads ESAHDSPRDET. A phosphoserine mark is found at Ser-1031 and Ser-1038. The region spanning 1273-1413 is the VPS9 domain; it reads ILRDQVLHEH…EFIKTIDDRK (141 aa).

The protein belongs to the GAPVD1 family. Interacts with TRIP10/CIP4. Interacts with RAB5A.

The protein localises to the membrane. It is found in the endosome. Its function is as follows. Acts both as a GTPase-activating protein (GAP) and a guanine nucleotide exchange factor (GEF), and participates in various processes such as endocytosis, insulin receptor internalization or LC2A4/GLUT4 trafficking. Acts as a GEF for the Ras-related protein RAB31 by exchanging bound GDP for free GTP, leading to regulate LC2A4/GLUT4 trafficking. In the absence of insulin, it maintains RAB31 in an active state and promotes a futile cycle between LC2A4/GLUT4 storage vesicles and early endosomes, retaining LC2A4/GLUT4 inside the cells. Upon insulin stimulation, it is translocated to the plasma membrane, releasing LC2A4/GLUT4 from intracellular storage vesicles. Also involved in EGFR trafficking and degradation, possibly by promoting EGFR ubiquitination and subsequent degradation by the proteasome. Has GEF activity for Rab5 and GAP activity for Ras. The protein is GTPase-activating protein and VPS9 domain-containing protein 1 (GAPVD1) of Bos taurus (Bovine).